The following is a 354-amino-acid chain: Protein REDOX 1 (354 aa).

Cys-44 lines the Zn(2+) pocket. 45 to 49 (HSDLH) contributes to the NAD(+) binding site. His-66, Cys-97, Cys-100, Cys-103, and Cys-111 together coordinate Zn(2+). NAD(+)-binding positions include 185–190 (GLGGLG), Lys-214, 271–273 (VGA), 295–297 (SAV), and Arg-340.

This sequence belongs to the zinc-containing alcohol dehydrogenase family. It depends on Zn(2+) as a cofactor. Expressed in leaf epidermis.

The enzyme catalyses 3,17-didehydrostemmadenine + NADPH + H2O = (16S)-deshydroxymethyl-stemmadenine + formate + NADP(+). The catalysed reaction is 3,17-didehydrostemmadenine + NADPH + H2O = (16R)-deshydroxymethyl-stemmadenine + formate + NADP(+). It carries out the reaction 17-dehydrostemmadenine + NADP(+) = 3,17-didehydrostemmadenine + NADPH. The protein operates within alkaloid biosynthesis. Functionally, component of iboga and aspidosperma monoterpenoid indole alkaloids (MIAs, e.g. tabersonine and catharanthine) biosynthesis pathway from 19E-geissoschizine. Catalyzes the first oxidation step of the unstable intermediate product resulting from the reaction triggered by the geissoschizine oxidase (GO) in the stemmadenine biosynthesis process from 19E-geissoschizine. This Catharanthus roseus (Madagascar periwinkle) protein is Protein REDOX 1.